The sequence spans 330 residues: 5'-AMP-activated protein kinase subunit gamma-1 (330 aa).

The span at M1–P12 shows a compositional bias: low complexity. A disordered region spans residues M1–S25. CBS domains are found at residues P42–L102, S124–E186, and I197–V259. ADP is bound by residues R69, M84–D89, V129, H150–R151, and K169. AMP contacts are provided by residues R69, M84–D89, V129, H150, H150–R151, K169, T199, A204, S225–A226, and S241–D244. ATP contacts are provided by residues R69, M84–D89, V129, H150–R151, R151, and K169. An AMPK pseudosubstrate motif is present at residues L137–E158. S241–D244 is an ADP binding site. Residue S241–D244 participates in ATP binding. S260 is modified (phosphoserine; by ULK1). Position 262 is a phosphothreonine; by ULK1 (T262). R268 is an ADP binding site. Residue R268 participates in AMP binding. R268 contributes to the ATP binding site. The residue at position 269 (S269) is a Phosphoserine; by ULK1. One can recognise a CBS 4 domain in the interval Y271 to K328. ADP is bound by residues L276 and H297–R298. AMP contacts are provided by residues L276, H297, H297 to R298, and S313 to D316. ATP contacts are provided by residues L276 and H297 to R298.

It belongs to the 5'-AMP-activated protein kinase gamma subunit family. AMPK is a heterotrimer of an alpha catalytic subunit (PRKAA1 or PRKAA2), a beta (PRKAB1 or PRKAB2) and a gamma non-catalytic subunits (PRKAG1, PRKAG2 or PRKAG3). Interacts with FNIP1 and FNIP2. In terms of processing, phosphorylated by ULK1 and ULK2; leading to negatively regulate AMPK activity and suggesting the existence of a regulatory feedback loop between ULK1, ULK2 and AMPK. There is some ambiguity for a phosphosite: Ser-260/Thr-262. Glycosylated; O-GlcNAcylated by OGT, promoting the AMP-activated protein kinase (AMPK) activity. As to expression, highly expressed in heart and brain, also found in kidney, white adipose tissue, lung and spleen.

Its function is as follows. AMP/ATP-binding subunit of AMP-activated protein kinase (AMPK), an energy sensor protein kinase that plays a key role in regulating cellular energy metabolism. In response to reduction of intracellular ATP levels, AMPK activates energy-producing pathways and inhibits energy-consuming processes: inhibits protein, carbohydrate and lipid biosynthesis, as well as cell growth and proliferation. AMPK acts via direct phosphorylation of metabolic enzymes, and by longer-term effects via phosphorylation of transcription regulators. Also acts as a regulator of cellular polarity by remodeling the actin cytoskeleton; probably by indirectly activating myosin. Gamma non-catalytic subunit mediates binding to AMP, ADP and ATP, leading to activate or inhibit AMPK: AMP-binding results in allosteric activation of alpha catalytic subunit (PRKAA1 or PRKAA2) both by inducing phosphorylation and preventing dephosphorylation of catalytic subunits. ADP also stimulates phosphorylation, without stimulating already phosphorylated catalytic subunit. ATP promotes dephosphorylation of catalytic subunit, rendering the AMPK enzyme inactive. The protein is 5'-AMP-activated protein kinase subunit gamma-1 (Prkag1) of Rattus norvegicus (Rat).